The primary structure comprises 722 residues: Inactive serine protease PAMR1 (722 aa).

Positions 1–21 (MALLVWSSLVVASLHLLGTAA) are cleaved as a signal peptide. A glycan (N-linked (GlcNAc...) asparagine) is linked at N98. 8 disulfide bridges follow: C130–C152, C179–C201, C241–C252, C246–C262, C264–C273, C282–C331, C317–C344, and C416–C444. The CUB domain maps to 130–238 (CGEVIQAARG…DGFYVTFEEV (109 aa)). Positions 237-274 (EVTGCSSTPCFHDGTCIADKTGSYRCACLAGYTGRHCE) constitute an EGF-like domain. 2 Sushi domains span residues 280 to 346 (KSCK…VCIK) and 393 to 446 (KPAL…SCIP). N318 carries an N-linked (GlcNAc...) asparagine glycan. A Peptidase S1 domain is found at 447–722 (ICGKLENFNI…FKEWLEKNMK (276 aa)). N455 is a glycosylation site (N-linked (GlcNAc...) asparagine). A disulfide bridge links C491 with C507. N616 is a glycosylation site (N-linked (GlcNAc...) asparagine). Disulfide bonds link C632/C651 and C663/C699.

It belongs to the peptidase S1 family.

Its subcellular location is the secreted. Functionally, may play a role in regeneration of skeletal muscle. This is Inactive serine protease PAMR1 (pamr1) from Xenopus tropicalis (Western clawed frog).